A 280-amino-acid polypeptide reads, in one-letter code: 4-deoxy-L-threo-5-hexosulose-uronate ketol-isomerase (280 aa).

Residues His198, His200, Glu205, and His247 each contribute to the Zn(2+) site.

Belongs to the KduI family. It depends on Zn(2+) as a cofactor.

The catalysed reaction is 5-dehydro-4-deoxy-D-glucuronate = 3-deoxy-D-glycero-2,5-hexodiulosonate. The protein operates within glycan metabolism; pectin degradation; 2-dehydro-3-deoxy-D-gluconate from pectin: step 4/5. Catalyzes the isomerization of 5-dehydro-4-deoxy-D-glucuronate to 3-deoxy-D-glycero-2,5-hexodiulosonate. The protein is 4-deoxy-L-threo-5-hexosulose-uronate ketol-isomerase of Lachnospira eligens (strain ATCC 27750 / DSM 3376 / VPI C15-48 / C15-B4) (Eubacterium eligens).